We begin with the raw amino-acid sequence, 166 residues long: Large ribosomal subunit protein uL10 (166 aa).

Belongs to the universal ribosomal protein uL10 family. As to quaternary structure, part of the ribosomal stalk of the 50S ribosomal subunit. The N-terminus interacts with L11 and the large rRNA to form the base of the stalk. The C-terminus forms an elongated spine to which L12 dimers bind in a sequential fashion forming a multimeric L10(L12)X complex.

In terms of biological role, forms part of the ribosomal stalk, playing a central role in the interaction of the ribosome with GTP-bound translation factors. This is Large ribosomal subunit protein uL10 from Marinomonas sp. (strain MWYL1).